Consider the following 67-residue polypeptide: Large ribosomal subunit protein bL31 (67 aa).

Zn(2+) is bound by residues cysteine 16, cysteine 18, cysteine 36, and cysteine 39.

The protein belongs to the bacterial ribosomal protein bL31 family. Type A subfamily. In terms of assembly, part of the 50S ribosomal subunit. The cofactor is Zn(2+).

Its function is as follows. Binds the 23S rRNA. In Treponema denticola (strain ATCC 35405 / DSM 14222 / CIP 103919 / JCM 8153 / KCTC 15104), this protein is Large ribosomal subunit protein bL31.